We begin with the raw amino-acid sequence, 103 residues long: N(4)-acetylcytidine amidohydrolase (103 aa).

The ASCH domain occupies 6-100; it reads ITFFQRFQND…NQMQFYVIDF (95 aa). Lys-21 serves as the catalytic Proton acceptor. Thr-24 serves as the catalytic Nucleophile. The Proton donor role is filled by Glu-74.

The protein belongs to the N(4)-acetylcytidine amidohydrolase family.

It catalyses the reaction N(4)-acetylcytidine + H2O = cytidine + acetate + H(+). The enzyme catalyses N(4)-acetyl-2'-deoxycytidine + H2O = 2'-deoxycytidine + acetate + H(+). It carries out the reaction N(4)-acetylcytosine + H2O = cytosine + acetate + H(+). Functionally, catalyzes the hydrolysis of N(4)-acetylcytidine (ac4C). The protein is N(4)-acetylcytidine amidohydrolase (yqfB) of Salmonella arizonae (strain ATCC BAA-731 / CDC346-86 / RSK2980).